Consider the following 1447-residue polypeptide: Regulator of G-protein signaling 12 (1447 aa).

Residues 1–21 are disordered; it reads MFRAGEASKRPLPGPSPPRVR. A PDZ domain is found at 22–98; it reads SVEVARGRAG…GVLHMVIAEG (77 aa). A phosphoserine mark is found at serine 172 and serine 195. Lysine 196 participates in a covalent cross-link: Glycyl lysine isopeptide (Lys-Gly) (interchain with G-Cter in SUMO2). The PID domain occupies 228-340; sequence VAMIVGYLGS…GALRTSCHVF (113 aa). Disordered stretches follow at residues 410 to 429 and 443 to 482; these read ADAHQNNSTSSNSDSGIGNF and LGGSSSRHGPGGSAWDGVGGRGAQPWGAPWTGPFCPDPEG. Residues 413 to 425 show a composition bias toward polar residues; that stretch reads HQNNSTSSNSDSG. Gly residues predominate over residues 451-464; sequence GPGGSAWDGVGGRG. Residues arginine 524 and arginine 633 each carry the omega-N-methylarginine modification. The interval 618-652 is disordered; it reads NVRKTKEDKKGSKFGRGTGLTQPSQRTSARRSFGR. 2 positions are modified to phosphoserine: serine 661 and serine 671. Residues 715 to 832 form the RGS domain; it reads SFERLLQDPV…LKSPLYQECI (118 aa). Over residues 843–853 the composition is skewed to polar residues; it reads DSQQVPSSPAS. The segment at 843–941 is disordered; the sequence is DSQQVPSSPA…RESQGSVSSA (99 aa). Phosphoserine occurs at positions 850 and 879. Basic and acidic residues predominate over residues 914 to 923; it reads EHGDHADDAL. Serine 943 bears the Phosphoserine mark. 2 consecutive RBD domains span residues 962 to 1032 and 1034 to 1104; these read KHCC…LEKR and LFRL…LEEK. A compositionally biased stretch (basic and acidic residues) spans 1103–1117; the sequence is EKDPSRGKASADKQK. The segment at 1103 to 1169 is disordered; it reads EKDPSRGKAS…RDPRLSKREE (67 aa). A compositionally biased stretch (polar residues) spans 1122–1136; sequence KQNTAVNSSSRNHSA. The segment covering 1151-1169 has biased composition (basic and acidic residues); sequence IKGENGKNARDPRLSKREE. A GoLoco domain is found at 1187–1209; sequence AEEFFELISKAQSNRADDQRGLL. A disordered region spans residues 1240 to 1447; the sequence is GFSKRSATGN…KTSAHHATFV (208 aa). Over residues 1244-1258 the composition is skewed to polar residues; sequence RSATGNGRESASQPG. 2 stretches are compositionally biased toward low complexity: residues 1267–1280 and 1289–1298; these read SSDSPSTSPGSASS and PPGQKSPSGP. The span at 1301-1313 shows a compositional bias: polar residues; it reads TPQSPVSLAQEGT.

In terms of assembly, interacts with GNAI1. Interacts with GNAI2 and GNAI3; the interactions are GDP-dependent. In terms of tissue distribution, isoform 3 is brain specific.

It is found in the nucleus. The protein localises to the cytoplasm. The protein resides in the cell projection. Its subcellular location is the dendrite. It localises to the synapse. It is found in the nucleus matrix. Functionally, regulates G protein-coupled receptor signaling cascades. Inhibits signal transduction by increasing the GTPase activity of G protein alpha subunits, thereby driving them into their inactive GDP-bound form. Its function is as follows. Behaves as a cell cycle-dependent transcriptional repressor, promoting inhibition of S-phase DNA synthesis. This is Regulator of G-protein signaling 12 (RGS12) from Homo sapiens (Human).